We begin with the raw amino-acid sequence, 384 residues long: ATP synthase subunit a (384 aa).

The segment at 22–60 is disordered; it reads PAPAAAPVEQHGAPAPEAAAPDAHAAPAGEHGAAVEAHA. 6 helical membrane-spanning segments follow: residues 131–151, 189–209, 218–238, 258–278, 293–313, and 319–339; these read KHVM…LAAV, FVPY…FGLI, NLSV…YAAI, LAPL…TKPF, FVIL…VAFG, and LGIF…FTML. The segment at 355 to 384 is disordered; sequence HGHAEEHGHAGPGMGSEHGSHVAGASPGHG.

It belongs to the ATPase A chain family. In terms of assembly, F-type ATPases have 2 components, CF(1) - the catalytic core - and CF(0) - the membrane proton channel. CF(1) has five subunits: alpha(3), beta(3), gamma(1), delta(1), epsilon(1). CF(0) has three main subunits: a(1), b(2) and c(9-12). The alpha and beta chains form an alternating ring which encloses part of the gamma chain. CF(1) is attached to CF(0) by a central stalk formed by the gamma and epsilon chains, while a peripheral stalk is formed by the delta and b chains.

It localises to the cell inner membrane. Its function is as follows. Key component of the proton channel; it plays a direct role in the translocation of protons across the membrane. The protein is ATP synthase subunit a of Anaeromyxobacter dehalogenans (strain 2CP-1 / ATCC BAA-258).